A 156-amino-acid polypeptide reads, in one-letter code: Small ribosomal subunit protein uS7 (156 aa).

It belongs to the universal ribosomal protein uS7 family. As to quaternary structure, part of the 30S ribosomal subunit. Contacts proteins S9 and S11.

Functionally, one of the primary rRNA binding proteins, it binds directly to 16S rRNA where it nucleates assembly of the head domain of the 30S subunit. Is located at the subunit interface close to the decoding center, probably blocks exit of the E-site tRNA. The polypeptide is Small ribosomal subunit protein uS7 (Pelobacter propionicus (strain DSM 2379 / NBRC 103807 / OttBd1)).